Reading from the N-terminus, the 433-residue chain is Acetyl-CoA-benzylalcohol acetyltransferase (433 aa).

Residues H152 and D377 each act as proton acceptor in the active site.

This sequence belongs to the plant acyltransferase family.

The enzyme catalyses benzyl alcohol + acetyl-CoA = benzyl acetate + CoA. It carries out the reaction (E)-cinnamyl alcohol + acetyl-CoA = (E)-cinnamyl acetate + CoA. In terms of biological role, involved in the biosynthesis of benzyl acetate, a major constituent of the floral scent. Can use benzylalcohol, cinnamylalcohol, 3-cis-hexene-1-ol or heptanol as substrates. Has some activity with 2-phenylethanol and 2-naphtalene-ethanol. The sequence is that of Acetyl-CoA-benzylalcohol acetyltransferase (BEAT) from Clarkia breweri (Fairy fans).